We begin with the raw amino-acid sequence, 118 residues long: Small ribosomal subunit protein uS13 (118 aa).

The disordered stretch occupies residues 95–118; sequence LPLRGQRTRTNARTRKGPRKAIKK.

This sequence belongs to the universal ribosomal protein uS13 family. Part of the 30S ribosomal subunit. Forms a loose heterodimer with protein S19. Forms two bridges to the 50S subunit in the 70S ribosome.

Functionally, located at the top of the head of the 30S subunit, it contacts several helices of the 16S rRNA. In the 70S ribosome it contacts the 23S rRNA (bridge B1a) and protein L5 of the 50S subunit (bridge B1b), connecting the 2 subunits; these bridges are implicated in subunit movement. Contacts the tRNAs in the A and P-sites. The chain is Small ribosomal subunit protein uS13 from Xylella fastidiosa (strain 9a5c).